Here is a 201-residue protein sequence, read N- to C-terminus: 3-isopropylmalate dehydratase small subunit (201 aa).

Belongs to the LeuD family. LeuD type 1 subfamily. In terms of assembly, heterodimer of LeuC and LeuD.

The enzyme catalyses (2R,3S)-3-isopropylmalate = (2S)-2-isopropylmalate. The protein operates within amino-acid biosynthesis; L-leucine biosynthesis; L-leucine from 3-methyl-2-oxobutanoate: step 2/4. Its function is as follows. Catalyzes the isomerization between 2-isopropylmalate and 3-isopropylmalate, via the formation of 2-isopropylmaleate. The protein is 3-isopropylmalate dehydratase small subunit of Nitrobacter winogradskyi (strain ATCC 25391 / DSM 10237 / CIP 104748 / NCIMB 11846 / Nb-255).